The chain runs to 102 residues: Salivary thrombin inhibitor anophelin (102 aa).

The N-terminal stretch at 1-21 is a signal peptide; it reads MATKLIVIAFLCAALIAVVQS. Residues 25–102 form a disordered region; it reads YAQGEEPTYD…SDSSSESTEH (78 aa). The segment covering 59 to 69 has biased composition (polar residues); the sequence is SQLTEYANTAQ. Residues 70–73 are blocks active site cleft of host thrombin in a reverse direction compared to substrates; sequence DPGR. The segment covering 80 to 90 has biased composition (polar residues); that stretch reads QANSNNGDQLP. Low complexity predominate over residues 91-102; it reads SQSDSSSESTEH.

The protein belongs to the anophelin family. In terms of assembly, interacts with human F2 (thrombin); the interaction results in thrombin inhibition.

The protein localises to the secreted. Its function is as follows. Salivary protein with anticoagulant activity that inhibits host thrombin (F2). This Anopheles funestus (African malaria mosquito) protein is Salivary thrombin inhibitor anophelin.